Consider the following 260-residue polypeptide: UPF0246 protein Bamb_2261 (260 aa).

Belongs to the UPF0246 family.

The polypeptide is UPF0246 protein Bamb_2261 (Burkholderia ambifaria (strain ATCC BAA-244 / DSM 16087 / CCUG 44356 / LMG 19182 / AMMD) (Burkholderia cepacia (strain AMMD))).